Here is a 337-residue protein sequence, read N- to C-terminus: Holliday junction branch migration complex subunit RuvB (337 aa).

The segment at 1-179 is large ATPase domain (RuvB-L); it reads MTHQVSVLHQ…FSFTGRMSYY (179 aa). ATP is bound by residues Leu18, Arg19, Gly60, Lys63, Thr64, Ser65, 126–128, Arg169, Tyr179, and Arg216; that span reads EDY. Thr64 serves as a coordination point for Mg(2+). The small ATPAse domain (RuvB-S) stretch occupies residues 180-250; sequence SDEDLTTILK…VAEKALAMLL (71 aa). The tract at residues 253–337 is head domain (RuvB-H); sequence DWGLNEIDIK…DNLQSLGEEK (85 aa). DNA-binding residues include Lys308 and Arg313.

The protein belongs to the RuvB family. Homohexamer. Forms an RuvA(8)-RuvB(12)-Holliday junction (HJ) complex. HJ DNA is sandwiched between 2 RuvA tetramers; dsDNA enters through RuvA and exits via RuvB. An RuvB hexamer assembles on each DNA strand where it exits the tetramer. Each RuvB hexamer is contacted by two RuvA subunits (via domain III) on 2 adjacent RuvB subunits; this complex drives branch migration. In the full resolvosome a probable DNA-RuvA(4)-RuvB(12)-RuvC(2) complex forms which resolves the HJ.

It localises to the cytoplasm. The catalysed reaction is ATP + H2O = ADP + phosphate + H(+). Functionally, the RuvA-RuvB-RuvC complex processes Holliday junction (HJ) DNA during genetic recombination and DNA repair, while the RuvA-RuvB complex plays an important role in the rescue of blocked DNA replication forks via replication fork reversal (RFR). RuvA specifically binds to HJ cruciform DNA, conferring on it an open structure. The RuvB hexamer acts as an ATP-dependent pump, pulling dsDNA into and through the RuvAB complex. RuvB forms 2 homohexamers on either side of HJ DNA bound by 1 or 2 RuvA tetramers; 4 subunits per hexamer contact DNA at a time. Coordinated motions by a converter formed by DNA-disengaged RuvB subunits stimulates ATP hydrolysis and nucleotide exchange. Immobilization of the converter enables RuvB to convert the ATP-contained energy into a lever motion, pulling 2 nucleotides of DNA out of the RuvA tetramer per ATP hydrolyzed, thus driving DNA branch migration. The RuvB motors rotate together with the DNA substrate, which together with the progressing nucleotide cycle form the mechanistic basis for DNA recombination by continuous HJ branch migration. Branch migration allows RuvC to scan DNA until it finds its consensus sequence, where it cleaves and resolves cruciform DNA. This Chlamydia caviae (strain ATCC VR-813 / DSM 19441 / 03DC25 / GPIC) (Chlamydophila caviae) protein is Holliday junction branch migration complex subunit RuvB.